The chain runs to 351 residues: sn-1 oleoyl-lipid 12-desaturase (351 aa).

The tract at residues 1-20 (MTLSIVKSEDSSSRPSAVPS) is disordered. Helical transmembrane passes span 44 to 62 (AWMT…WLGI) and 68 to 88 (FLLP…FVIG). The Histidine box-1 motif lies at 89-93 (HDCGH). The helical transmembrane segment at 100–120 (VWVNDWVGHILFLPIIYPFHS) threads the bilayer. The Histidine box-2 signature appears at 125–129 (HNQHH). 2 consecutive transmembrane segments (helical) span residues 199 to 219 (LLVI…IGVW) and 221 to 241 (FVKF…TFTL). A Histidine box-3 motif is present at residues 289 to 293 (HHVTT).

This sequence belongs to the fatty acid desaturase type 2 family. Fe(2+) is required as a cofactor.

The protein resides in the cellular thylakoid membrane. It carries out the reaction a 1-[(9Z)-octadecenoyl]-2-acyl-glycerolipid + 2 reduced [2Fe-2S]-[ferredoxin] + O2 + 2 H(+) = a 1-[(9Z,12Z)-octadecdienoyl]-2-acyl-glycerolipid + 2 oxidized [2Fe-2S]-[ferredoxin] + 2 H2O. Its pathway is lipid metabolism; polyunsaturated fatty acid biosynthesis. In terms of biological role, desaturase involved in fatty acid biosynthesis. Introduces a double bond at carbon 12 of oleoyl groups (18:1) attached to the sn-1 position of the glycerol moiety of membrane glycerolipids. This is sn-1 oleoyl-lipid 12-desaturase from Arthrospira platensis (Spirulina platensis).